A 401-amino-acid polypeptide reads, in one-letter code: tRNA(Met) cytidine acetate ligase (401 aa).

ATP contacts are provided by residues 7 to 20 (IVEYNPFHNGHLYH), G102, N164, and R189.

Belongs to the TmcAL family.

Its subcellular location is the cytoplasm. It carries out the reaction cytidine(34) in elongator tRNA(Met) + acetate + ATP = N(4)-acetylcytidine(34) in elongator tRNA(Met) + AMP + diphosphate. Catalyzes the formation of N(4)-acetylcytidine (ac(4)C) at the wobble position of elongator tRNA(Met), using acetate and ATP as substrates. First activates an acetate ion to form acetyladenylate (Ac-AMP) and then transfers the acetyl group to tRNA to form ac(4)C34. The polypeptide is tRNA(Met) cytidine acetate ligase (Thermoanaerobacter pseudethanolicus (strain ATCC 33223 / 39E) (Clostridium thermohydrosulfuricum)).